The sequence spans 274 residues: Thiazole synthase (274 aa).

K115 (schiff-base intermediate with DXP) is an active-site residue. 1-deoxy-D-xylulose 5-phosphate-binding positions include G176, 202–203, and 224–225; these read AG and NS.

The protein belongs to the ThiG family. Homotetramer. Forms heterodimers with either ThiH or ThiS.

The protein localises to the cytoplasm. It carries out the reaction [ThiS sulfur-carrier protein]-C-terminal-Gly-aminoethanethioate + 2-iminoacetate + 1-deoxy-D-xylulose 5-phosphate = [ThiS sulfur-carrier protein]-C-terminal Gly-Gly + 2-[(2R,5Z)-2-carboxy-4-methylthiazol-5(2H)-ylidene]ethyl phosphate + 2 H2O + H(+). Its pathway is cofactor biosynthesis; thiamine diphosphate biosynthesis. Functionally, catalyzes the rearrangement of 1-deoxy-D-xylulose 5-phosphate (DXP) to produce the thiazole phosphate moiety of thiamine. Sulfur is provided by the thiocarboxylate moiety of the carrier protein ThiS. In vitro, sulfur can be provided by H(2)S. The chain is Thiazole synthase from Psychrobacter cryohalolentis (strain ATCC BAA-1226 / DSM 17306 / VKM B-2378 / K5).